The primary structure comprises 493 residues: Cobyric acid synthase (493 aa).

Positions 252–441 (DLKITVIRLP…LHGLLENGPW (190 aa)) constitute a GATase cobBQ-type domain. The active-site Nucleophile is Cys333. His433 is an active-site residue.

The protein belongs to the CobB/CobQ family. CobQ subfamily.

Its pathway is cofactor biosynthesis; adenosylcobalamin biosynthesis. Functionally, catalyzes amidations at positions B, D, E, and G on adenosylcobyrinic A,C-diamide. NH(2) groups are provided by glutamine, and one molecule of ATP is hydrogenolyzed for each amidation. The chain is Cobyric acid synthase from Thermosynechococcus vestitus (strain NIES-2133 / IAM M-273 / BP-1).